Reading from the N-terminus, the 526-residue chain is ATLQCSWALTPTDCKTTKPLAEKALDLINKWRRDGYLFQLLRVADAHLDGAESATVYYLVLDVKETDCSVLSRKHWEDCDPDLTKRPSLDVIGQCKVIATRYSDEYQTLRLNDFNCTTSSVSSALANTKDSPVLFDFIEDTEPFRKSADKALEVYKSESEAYASFRVDRVERVTRVKGGERTNYYVDFSVRNCSRSHFHRHPAFGFCRADLSFDVEASNLENPEDVIISCEVFNFEEHGNISGFRPHLGKTPLGTDGSRDHHHPHKPHKFGCPPPQEGEDFSEGPPLQGGTPPLSPPFRPRCRHRPFGTNETHRFPHHRISVNIIHRPPPHGHHPHGPPPHGHHPHGPPPHGHPPHGPPPRHPPHGPPPHGHPPHGPPPHGHPPHGPPPHGHPPHGPPPHGHPPHGHGFHDHGPCDPPSHKEGPQDLHQHAMGPPPKHPGKRGPGKGHFPFHWRRIGSVYQLPPLQKGEVLPLPEANFPQLLLRNHTHPLKPEIQPFPQVASERCPEEFNGEFAQLSKFFPSTFPK.

A signal peptide spans 1-8; that stretch reads ATLQCSWA. Cystatin domains are found at residues 9–126 and 127–243; these read LTPT…SALA and NTKD…NISG. Disulfide bonds link Cys-14/Cys-505, Cys-68/Cys-79, Cys-95/Cys-116, Cys-193/Cys-415, Cys-207/Cys-230, and Cys-272/Cys-302. The interval 31–74 is interaction with ATP5F1A; the sequence is WRRDGYLFQLLRVADAHLDGAESATVYYLVLDVKETDCSVLSRK. N-linked (GlcNAc...) asparagine glycosylation is found at Asn-115 and Asn-192. Asn-240 is a glycosylation site (N-linked (GlcNAc...) asparagine). The interval 243–449 is disordered; sequence GFRPHLGKTP…GKRGPGKGHF (207 aa). A compositionally biased stretch (basic residues) spans 260 to 269; sequence DHHHPHKPHK. N-linked (GlcNAc...) asparagine glycosylation occurs at Asn-310. Basic residues predominate over residues 328–346; that stretch reads PPPHGHHPHGPPPHGHHPH. The span at 347-401 shows a compositional bias: pro residues; sequence GPPPHGHPPHGPPPRHPPHGPPPHGHPPHGPPPHGHPPHGPPPHGHPPHGPPPHG. Residues 408–429 show a composition bias toward basic and acidic residues; sequence GFHDHGPCDPPSHKEGPQDLHQ. Positions 438 to 449 are enriched in basic residues; it reads HPGKRGPGKGHF. N-linked (GlcNAc...) asparagine glycosylation is present at Asn-485.

As to quaternary structure, interacts with THBS1 (via the TSP type I repeats); the interaction blocks the antiangiogenic effect of THBS1 with CD36. Interacts with THBS2; the interaction blocks the antiangiogenic effect of THBS2 with CD36. Interacts with HPSE; the interaction is enhanced at acidic pH, partially inhibits binding of HPSE to cell surface receptors and modulates its enzymatic activity. Interacts (via the HRR domain) with TMP1; the interaction partially mediates the antiangiogenic properties of HRG. Interacts with kappa and lambda light chains of IgG molecules. Interacts with ATP5F1A; the interaction occurs on the surface of T-cells and alters their cell morphology in concert with CONA. Binds IgG molecules containing kappa and lambda light chains and inhibits the formation of insoluble immunoglobulin complexes. Interacts with F12; the interaction, which is enhanced in the presence of zinc ions and inhibited by heparin-binding to HRG, inhibits factor XII autoactivation and contact-initiated coagulation. Interacts with PLG (via its Kringle domains); the interaction tethers PLG to the cell surface and enhances its activation. Interacts (via the HRR domain) with TPM1; the interaction appears to contribute to the antiangiogenic properties of the HRR domain. In terms of processing, N-glycosylated. Proteolytic cleavage produces several HRG fragments which are mostly disulfide-linked and, therefore, not released. On platelet activation, may release a 33 kDa antiangiogenic peptide which encompasses the HRR.

Its subcellular location is the secreted. In terms of biological role, plasma glycoprotein that binds a number of ligands such as heme, heparin, heparan sulfate, thrombospondin, plasminogen, and divalent metal ions. Inhibits rosette formation. Acts as an adapter protein and implicated in regulating many processes such as immune complex and pathogen clearance, cell adhesion, angiogenesis, coagulation and fibrinolysis. Mediates clearance of necrotic cells through enhancing the phagocytosis of necrotic cells in a heparan sulfate-dependent pathway. This process can be regulated by the presence of certain HRG ligands such as heparin and zinc ions. Binds to IgG subclasses of immunoglobins containing kappa and lambda light chains with different affinities regulating their clearance and inhibiting the formation of insoluble immune complexes. Binds T-cells and alters the cell morphology Modulates angiogenesis by blocking the CD6-mediated antiangiongenic effect of thrombospondins, THBS1 and THBS2. Tethers plasminogen to the cell surface. In Oryctolagus cuniculus (Rabbit), this protein is Histidine-rich glycoprotein (HRG).